Here is a 218-residue protein sequence, read N- to C-terminus: Small ribosomal subunit protein uS3c (218 aa).

In terms of domain architecture, KH type-2 spans 43 to 118; the sequence is IKNYVQKNMK…KLNISITRIE (76 aa).

This sequence belongs to the universal ribosomal protein uS3 family. As to quaternary structure, part of the 30S ribosomal subunit.

Its subcellular location is the plastid. It localises to the chloroplast. The chain is Small ribosomal subunit protein uS3c (rps3) from Populus trichocarpa (Western balsam poplar).